The following is a 239-amino-acid chain: MAVRINAMAVTFVAHALAVIAAIMVLVWSISYRGGLAWEATNKNLIFNLHPVLMLIGFIILGGEAIISYKSLPLEKPVKKLIHLILHAIALALGIFGICAAFKNHNESHIPNLYSLHSWIGIGVISLYGFQWVYSFIVFFFPGGSTNLKSGLLPWHAMLGLFVYILAVGNAALGFLEKLTFLENGGLDKYGSEAFLINFTAIITILFGAFVVLTASAESPSPSPSVSNDDSVDFSYSAI.

Residues 1 to 7 (MAVRINA) lie on the Cytoplasmic side of the membrane. The helical transmembrane segment at 8–28 (MAVTFVAHALAVIAAIMVLVW) threads the bilayer. Residues 13–216 (VAHALAVIAA…FGAFVVLTAS (204 aa)) enclose the Cytochrome b561 domain. The Lumenal segment spans residues 29–45 (SISYRGGLAWEATNKNL). The chain crosses the membrane as a helical span at residues 46 to 66 (IFNLHPVLMLIGFIILGGEAI). A heme b-binding site is contributed by His50. The Cytoplasmic portion of the chain corresponds to 67–81 (ISYKSLPLEKPVKKL). Residues 82–102 (IHLILHAIALALGIFGICAAF) form a helical membrane-spanning segment. Residues His83 and His117 each contribute to the heme b site. Over 103-119 (KNHNESHIPNLYSLHSW) the chain is Lumenal. A helical membrane pass occupies residues 120–140 (IGIGVISLYGFQWVYSFIVFF). Over 141 to 155 (FPGGSTNLKSGLLPW) the chain is Cytoplasmic. Heme b is bound at residue His156. Residues 156-176 (HAMLGLFVYILAVGNAALGFL) traverse the membrane as a helical segment. Topologically, residues 177-193 (EKLTFLENGGLDKYGSE) are lumenal. Residues 194–214 (AFLINFTAIITILFGAFVVLT) form a helical membrane-spanning segment. At 215-239 (ASAESPSPSPSVSNDDSVDFSYSAI) the chain is on the cytoplasmic side. Positions 217–239 (AESPSPSPSVSNDDSVDFSYSAI) are disordered. A compositionally biased stretch (low complexity) spans 224 to 239 (PSVSNDDSVDFSYSAI).

Homodimer. The cofactor is heme b. Expressed in roots, seedlings and leaves. Lower expression in flowers. Expressed in the L1 layer of the shoot apex, in the epidermis of leaf primordia and young leaves and in vascular bundles. In the differentiation zone of the root, detected in the pericycle and in the epidermis, but not in the cortex. Strongly expressed in the lateral part of the root cap and in the epidermis of the root tip, but not in the meristematic tissue. Not expressed in lateral roots. In mature embryos, expressed in the epidermis, cotyledon tips and root tips.

The protein resides in the vacuole membrane. The enzyme catalyses Fe(3+)(out) + L-ascorbate(in) = monodehydro-L-ascorbate radical(in) + Fe(2+)(out) + H(+). Functionally, two-heme-containing cytochrome. Catalyzes ascorbate-dependent trans-membrane ferric-chelate reduction. Able to use dihydrolipoic acid (DHLA) as an alternative substrate to ascorbate. The protein is Transmembrane ascorbate ferrireductase 1 (CYB561A) of Arabidopsis thaliana (Mouse-ear cress).